A 339-amino-acid chain; its full sequence is Protein H339R (339 aa).

The protein belongs to the asfivirus H339R family. Interacts with host NACA (alpha chain of nascent polypeptide-associated complex).

It is found in the host cytoplasm. The protein localises to the host nucleus. The chain is Protein H339R from African swine fever virus (isolate Tick/Malawi/Lil 20-1/1983) (ASFV).